We begin with the raw amino-acid sequence, 75 residues long: Protein BsdD (75 aa).

In terms of biological role, involved in the non-oxidative decarboxylation and detoxification of phenolic derivatives under both aerobic and anaerobic conditions, however the precise biochemical function of BsdD in metabolism of phenolic acid is unknown. The protein is Protein BsdD of Bacillus subtilis (strain 168).